A 305-amino-acid polypeptide reads, in one-letter code: Sulfate adenylyltransferase subunit 2 (305 aa).

The protein belongs to the PAPS reductase family. CysD subfamily. Heterodimer composed of CysD, the smaller subunit, and CysN.

It catalyses the reaction sulfate + ATP + H(+) = adenosine 5'-phosphosulfate + diphosphate. The protein operates within sulfur metabolism; hydrogen sulfide biosynthesis; sulfite from sulfate: step 1/3. Its function is as follows. With CysN forms the ATP sulfurylase (ATPS) that catalyzes the adenylation of sulfate producing adenosine 5'-phosphosulfate (APS) and diphosphate, the first enzymatic step in sulfur assimilation pathway. APS synthesis involves the formation of a high-energy phosphoric-sulfuric acid anhydride bond driven by GTP hydrolysis by CysN coupled to ATP hydrolysis by CysD. The sequence is that of Sulfate adenylyltransferase subunit 2 from Pseudomonas aeruginosa (strain LESB58).